The sequence spans 194 residues: Probable RNA 2'-phosphotransferase (194 aa).

The protein belongs to the KptA/TPT1 family.

Removes the 2'-phosphate from RNA via an intermediate in which the phosphate is ADP-ribosylated by NAD followed by a presumed transesterification to release the RNA and generate ADP-ribose 1''-2''-cyclic phosphate (APPR&gt;P). May function as an ADP-ribosylase. The polypeptide is Probable RNA 2'-phosphotransferase (Escherichia coli O45:K1 (strain S88 / ExPEC)).